Here is a 167-residue protein sequence, read N- to C-terminus: Leukotoxin-activating lysine-acyltransferase LktC serotype A11 (167 aa).

Catalysis depends on residues histidine 22 and aspartate 91.

Belongs to the RTX toxin acyltransferase family.

It localises to the cytoplasm. The enzyme catalyses a fatty acyl-[ACP] + L-lysyl-[protein] = N(6)-(fatty acyl)-L-lysyl-[protein] + holo-[ACP] + H(+). In terms of biological role, involved in fatty acylation of the protoxin (LktA) at two internal lysine residues, thereby converting it to the active toxin. This Mannheimia haemolytica (Pasteurella haemolytica) protein is Leukotoxin-activating lysine-acyltransferase LktC serotype A11 (lktC).